Reading from the N-terminus, the 410-residue chain is Putative ribonuclease E (410 aa).

Positions 39–119 (SNIYKGKIVR…GTKGALLTTF (81 aa)) constitute an S1 motif domain. Mg(2+) contacts are provided by D303 and D346.

The protein belongs to the RNase E/G family. RNase E subfamily. In terms of assembly, component of the RNA degradosome, which is a multiprotein complex involved in RNA processing and mRNA degradation. Within the RNA degradosome, RNase E assembles into a homotetramer formed by a dimer of dimers. The cofactor is Mg(2+).

The protein localises to the cytoplasm. The protein resides in the cell inner membrane. It catalyses the reaction Endonucleolytic cleavage of single-stranded RNA in A- and U-rich regions.. Endoribonuclease that plays a central role in RNA processing and decay. Required for the maturation of 5S and 16S rRNAs and the majority of tRNAs. Also involved in the degradation of most mRNAs. The protein is Putative ribonuclease E (rne) of Buchnera aphidicola subsp. Baizongia pistaciae (strain Bp).